The chain runs to 173 residues: Thaumatin-like protein PWIR2 (173 aa).

An N-terminal signal peptide occupies residues 1–20 (MATSPVLFLLLAVFAAGASA).

This sequence belongs to the thaumatin family.

This chain is Thaumatin-like protein PWIR2, found in Triticum aestivum (Wheat).